Here is a 516-residue protein sequence, read N- to C-terminus: Extracellular endo-inulinase inuB (516 aa).

The first 25 residues, 1–25 (MLNPKVAYMVWMTCLGLTLPSQAQS), serve as a signal peptide directing secretion. Substrate is bound by residues 40–43 (WMNE), Q59, W67, and 99–100 (FT). E43 is a catalytic residue. N109 is a glycosylation site (N-linked (GlcNAc...) asparagine). Residues 175 to 176 (RD) and E233 each bind substrate. N-linked (GlcNAc...) asparagine glycans are attached at residues N372, N419, and N424.

The protein belongs to the glycosyl hydrolase 32 family.

The protein resides in the secreted. It carries out the reaction Endohydrolysis of (2-&gt;1)-beta-D-fructosidic linkages in inulin.. In terms of biological role, endo-inulinase involved in utilization of the plant storage polymer inulin, consisting of fructooligosaccharides with a degree of polymerization (DP) value from 2 to 60. This is Extracellular endo-inulinase inuB (inuB) from Aspergillus niger.